We begin with the raw amino-acid sequence, 283 residues long: Non-selective voltage-gated ion channel VDAC1 (283 aa).

Residue alanine 2 is modified to N-acetylalanine. An ATP-binding site is contributed by lysine 12. A Glycyl lysine isopeptide (Lys-Gly) (interchain with G-Cter in ubiquitin) cross-link involves residue lysine 12. Phosphoserine is present on serine 13. Threonine 19 is subject to Phosphothreonine. Residue lysine 20 participates in ATP binding. Lysine 20 carries the N6-acetyllysine; alternate modification. Position 20 is an N6-succinyllysine; alternate (lysine 20). A Glycyl lysine isopeptide (Lys-Gly) (interchain with G-Cter in ubiquitin); alternate cross-link involves residue lysine 20. Transmembrane regions (beta stranded) follow at residues 26–35 (LIKLDLKTKS) and 39–47 (LEFTSSGSA). Glycyl lysine isopeptide (Lys-Gly) (interchain with G-Cter in ubiquitin) cross-links involve residues lysine 53 and lysine 61. Residues 54-64 (VTGSLETKYRW) form a beta stranded membrane-spanning segment. Tyrosine 67 is subject to Phosphotyrosine. Transmembrane regions (beta stranded) follow at residues 69–76 (LTFTEKWN), 80–89 (TLGTEITVED), and 95–104 (LKLTFDSSFS). At threonine 107 the chain carries Phosphothreonine. Lysine 109 carries the post-translational modification N6-acetyllysine; alternate. Lysine 109 is covalently cross-linked (Glycyl lysine isopeptide (Lys-Gly) (interchain with G-Cter in ubiquitin); alternate). A Glycyl lysine isopeptide (Lys-Gly) (interchain with G-Cter in ubiquitin) cross-link involves residue lysine 110. Transmembrane regions (beta stranded) follow at residues 111–120 (NAKIKTGYKR), 123–130 (INLGCDMD), 137–145 (SIRGALVLG), and 150–158 (LAGYQMNFE). Lysine 161 participates in a covalent cross-link: Glycyl lysine isopeptide (Lys-Gly) (interchain with G-Cter in ubiquitin). 6 consecutive transmembrane segments (beta stranded) span residues 163-175 (RVTQSNFAVGYKT), 178-185 (FQLHTNVN), 189-198 (EFGGSIYQKV), 202-211 (LETAVNLAWT), 218-227 (RFGIAAKYQI), and 231-238 (ACFSAKVN). Serine 193 carries the phosphoserine; by NEK1 modification. Serine 240 is modified (phosphoserine). 242–244 (LIG) is an NAD(+) binding site. The beta stranded transmembrane segment at 242–251 (LIGLGYTQTL) threads the bilayer. An N6-acetyllysine modification is found at lysine 252. Residues 254–263 (GIKLTLSALL) form a beta stranded membrane-spanning segment. An NAD(+)-binding site is contributed by 260 to 264 (SALLD). Position 266 is an N6-acetyllysine; alternate (lysine 266). Residue lysine 266 forms a Glycyl lysine isopeptide (Lys-Gly) (interchain with G-Cter in ubiquitin); alternate linkage. Residues 273–282 (HKLGLGLEFQ) form a beta stranded membrane-spanning segment. Lysine 274 participates in a covalent cross-link: Glycyl lysine isopeptide (Lys-Gly) (interchain with G-Cter in ubiquitin).

The protein belongs to the eukaryotic mitochondrial porin family. As to quaternary structure, homodimer and homotrimer; in response to cyclic AMP or calcium; oligomerization is required for scramblase activity. Component of the mitochondrial permeability transition pore complex (mPTPC), at least composed of SPG7, VDAC1 and PPIF. Interacts with SPG7, NIPSNAP2 and SLC25A30. Interacts with hexokinases including HK1. The HK1-VDAC1 complex interacts with ATF2. Interacts with BCL2L1. Interacts with BAK1. Interacts with RTL10/BOP (via BH3 domain). Interacts with amyloid-beta and APP; induces VDAC1 dephosphorylation. Interacts with TMEM41B. Interacts with BCAP31. Interacts with HSPA9; this interaction couples ITPR1 to VDAC1. (Microbial infection) Interacts with influenza A virus PB1-F2 protein. Phosphorylation at Ser-193 by NEK1 promotes the closed conformational state preventing excessive mitochondrial membrane permeability and subsequent apoptotic cell death after injury. Phosphorylation by the AKT-GSK3B axis stabilizes the protein probably by preventing ubiquitin-mediated proteasomal degradation. Post-translationally, ubiquitinated. Undergoes monoubiquitination and polyubiquitination by PRKN; monoubiquitination at Lys-274 inhibits apoptosis, whereas polyubiquitination leads to its degradation and promotes mitophagy. Deubiquitinated by USP30. Expressed in erythrocytes (at protein level). Expressed in heart, liver and skeletal muscle.

The protein localises to the mitochondrion outer membrane. It localises to the cell membrane. It is found in the membrane raft. The catalysed reaction is chloride(in) = chloride(out). The enzyme catalyses K(+)(in) = K(+)(out). It carries out the reaction ATP(in) = ATP(out). It catalyses the reaction Ca(2+)(in) = Ca(2+)(out). The catalysed reaction is Na(+)(in) = Na(+)(out). The enzyme catalyses Mg(2+)(in) = Mg(2+)(out). It carries out the reaction L-glutamate(out) = L-glutamate(in). It catalyses the reaction dopamine(out) = dopamine(in). The catalysed reaction is acetylcholine(in) = acetylcholine(out). The enzyme catalyses Fe(III)-[cytochrome c](out) = Fe(III)-[cytochrome c](in). It carries out the reaction a 1,2-diacyl-sn-glycero-3-phosphocholine(in) = a 1,2-diacyl-sn-glycero-3-phosphocholine(out). It catalyses the reaction a 1,2-diacyl-sn-glycero-3-phospho-L-serine(in) = a 1,2-diacyl-sn-glycero-3-phospho-L-serine(out). Inhibited by nitric oxide. Functionally, non-selective voltage-gated ion channel that mediates the transport of anions and cations through the mitochondrion outer membrane and plasma membrane. The channel at the outer mitochondrial membrane allows diffusion of small hydrophilic molecules; in the plasma membrane it is involved in cell volume regulation and apoptosis. It adopts an open conformation at low or zero membrane potential and a closed conformation at potentials above 30-40 mV. The open state has a weak anion selectivity whereas the closed state is cation-selective. Binds various signaling molecules, including the sphingolipid ceramide, the phospholipid phosphatidylcholine, and the sterols cholesterol and oxysterol. In depolarized mitochondria, acts downstream of PRKN and PINK1 to promote mitophagy or prevent apoptosis; polyubiquitination by PRKN promotes mitophagy, while monoubiquitination by PRKN decreases mitochondrial calcium influx which ultimately inhibits apoptosis. May participate in the formation of the permeability transition pore complex (PTPC) responsible for the release of mitochondrial products that triggers apoptosis. May mediate ATP export from cells. Part of a complex composed of HSPA9, ITPR1 and VDAC1 that regulates mitochondrial calcium-dependent apoptosis by facilitating calcium transport from the ER lumen to the mitochondria intermembrane space thus providing calcium for the downstream calcium channel MCU that directly releases it into mitochondria matrix. Mediates cytochrome c efflux. In terms of biological role, catalyzes the scrambling of phospholipids across the outer mitochondrial membrane; the mechanism is unrelated to channel activity and is capable of translocating both anionic and zwitterionic phospholipids. This Homo sapiens (Human) protein is Non-selective voltage-gated ion channel VDAC1.